Here is a 155-residue protein sequence, read N- to C-terminus: Superoxide dismutase [Cu-Zn] (155 aa).

Residues His-47, His-49, and His-64 each contribute to the Cu cation site. Cys-58 and Cys-147 are joined by a disulfide. Zn(2+) contacts are provided by His-64, His-72, His-81, and Asp-84. His-121 lines the Cu cation pocket. Arg-144 is a binding site for substrate.

This sequence belongs to the Cu-Zn superoxide dismutase family. In terms of assembly, homodimer. It depends on Cu cation as a cofactor. Zn(2+) is required as a cofactor.

The protein resides in the cytoplasm. The enzyme catalyses 2 superoxide + 2 H(+) = H2O2 + O2. Destroys radicals which are normally produced within the cells and which are toxic to biological systems. This chain is Superoxide dismutase [Cu-Zn] (SOD1), found in Kluyveromyces lactis (strain ATCC 8585 / CBS 2359 / DSM 70799 / NBRC 1267 / NRRL Y-1140 / WM37) (Yeast).